Consider the following 315-residue polypeptide: Shiga toxin subunit A (315 aa).

Positions 1 to 22 are cleaved as a signal peptide; sequence MKIIIFRVLTFFFVIFSVNVVA. The A1 stretch occupies residues 23-273; sequence KEFTLDFSTA…CHHHASRVAR (251 aa). Glu189 is a catalytic residue. An intrachain disulfide couples Cys264 to Cys283. The A2 stretch occupies residues 274–315; it reads MASDEFPSMCPADGRVRGITHNKILWDSSTLGAILMRRTISS.

This sequence belongs to the ribosome-inactivating protein family. As to quaternary structure, shiga toxin contains a single subunit A and five copies of subunit B.

The catalysed reaction is Endohydrolysis of the N-glycosidic bond at one specific adenosine on the 28S rRNA.. Functionally, the A subunit is responsible for inhibiting protein synthesis through the catalytic inactivation of 60S ribosomal subunits. After endocytosis, the A subunit is cleaved by furin in two fragments, A1 and A2: A1 is the catalytically active fragment, and A2 is essential for holotoxin assembly with the B subunits. The protein is Shiga toxin subunit A (stxA) of Shigella sonnei (Shigella sonnei bacteriophage 7888).